Here is a 200-residue protein sequence, read N- to C-terminus: Potassium-transporting ATPase KdpC subunit (200 aa).

A helical transmembrane segment spans residues proline 6–threonine 26.

This sequence belongs to the KdpC family. In terms of assembly, the system is composed of three essential subunits: KdpA, KdpB and KdpC.

The protein localises to the cell inner membrane. Functionally, part of the high-affinity ATP-driven potassium transport (or Kdp) system, which catalyzes the hydrolysis of ATP coupled with the electrogenic transport of potassium into the cytoplasm. This subunit acts as a catalytic chaperone that increases the ATP-binding affinity of the ATP-hydrolyzing subunit KdpB by the formation of a transient KdpB/KdpC/ATP ternary complex. The chain is Potassium-transporting ATPase KdpC subunit from Yersinia enterocolitica serotype O:8 / biotype 1B (strain NCTC 13174 / 8081).